The following is a 341-amino-acid chain: Cytochrome c biogenesis protein CcsA (341 aa).

The next 8 helical transmembrane spans lie at 16–36, 37–57, 68–88, 97–117, 142–162, 249–269, 276–296, and 310–330; these read LILL…GMSI, LPTL…TLLG, LSNL…VHLI, LVGV…ALSL, VMML…AFLI, IIGL…VWAN, WSWD…AAYL, and AILA…VNLL.

Belongs to the CcmF/CycK/Ccl1/NrfE/CcsA family. May interact with ccs1.

The protein localises to the cellular thylakoid membrane. Required during biogenesis of c-type cytochromes (cytochrome c6 and cytochrome f) at the step of heme attachment. The sequence is that of Cytochrome c biogenesis protein CcsA from Rippkaea orientalis (strain PCC 8801 / RF-1) (Cyanothece sp. (strain PCC 8801)).